A 396-amino-acid chain; its full sequence is Cell division protein FtsZ 1 (396 aa).

Residues methionine 1–methionine 38 form a disordered region. A compositionally biased stretch (acidic residues) spans alanine 8–alanine 19. GTP-binding positions include glycine 61–asparagine 65, glycine 148–glycine 150, glutamate 179, arginine 183, and aspartate 226. The tract at residues glutamine 358–glutamate 396 is disordered.

This sequence belongs to the FtsZ family. Homodimer. Polymerizes to form a dynamic ring structure in a strictly GTP-dependent manner. Interacts directly with several other division proteins.

The protein resides in the cytoplasm. Functionally, essential cell division protein that forms a contractile ring structure (Z ring) at the future cell division site. The regulation of the ring assembly controls the timing and the location of cell division. One of the functions of the FtsZ ring is to recruit other cell division proteins to the septum to produce a new cell wall between the dividing cells. Binds GTP and shows GTPase activity. This Halobacterium salinarum (strain ATCC 29341 / DSM 671 / R1) protein is Cell division protein FtsZ 1.